Here is a 352-residue protein sequence, read N- to C-terminus: Chorismate synthase (352 aa).

NADP(+) is bound at residue Arg48. FMN contacts are provided by residues 125-127, 238-239, Gly278, 293-297, and Arg319; these read RSS, NA, and KPTSS.

Belongs to the chorismate synthase family. As to quaternary structure, homotetramer. It depends on FMNH2 as a cofactor.

It carries out the reaction 5-O-(1-carboxyvinyl)-3-phosphoshikimate = chorismate + phosphate. It participates in metabolic intermediate biosynthesis; chorismate biosynthesis; chorismate from D-erythrose 4-phosphate and phosphoenolpyruvate: step 7/7. In terms of biological role, catalyzes the anti-1,4-elimination of the C-3 phosphate and the C-6 proR hydrogen from 5-enolpyruvylshikimate-3-phosphate (EPSP) to yield chorismate, which is the branch point compound that serves as the starting substrate for the three terminal pathways of aromatic amino acid biosynthesis. This reaction introduces a second double bond into the aromatic ring system. The chain is Chorismate synthase from Legionella pneumophila (strain Paris).